Consider the following 586-residue polypeptide: Dihydroxy-acid dehydratase 2 (586 aa).

Cysteine 68 lines the [2Fe-2S] cluster pocket. Mg(2+) is bound at residue aspartate 100. A [2Fe-2S] cluster-binding site is contributed by cysteine 141. Mg(2+) is bound by residues aspartate 142 and lysine 143. Lysine 143 carries the post-translational modification N6-carboxylysine. Position 213 (cysteine 213) interacts with [2Fe-2S] cluster. Position 463 (glutamate 463) interacts with Mg(2+). The active-site Proton acceptor is serine 489.

This sequence belongs to the IlvD/Edd family. Homodimer. [2Fe-2S] cluster serves as cofactor. It depends on Mg(2+) as a cofactor.

The catalysed reaction is (2R)-2,3-dihydroxy-3-methylbutanoate = 3-methyl-2-oxobutanoate + H2O. It carries out the reaction (2R,3R)-2,3-dihydroxy-3-methylpentanoate = (S)-3-methyl-2-oxopentanoate + H2O. Its pathway is amino-acid biosynthesis; L-isoleucine biosynthesis; L-isoleucine from 2-oxobutanoate: step 3/4. It participates in amino-acid biosynthesis; L-valine biosynthesis; L-valine from pyruvate: step 3/4. Functionally, functions in the biosynthesis of branched-chain amino acids. Catalyzes the dehydration of (2R,3R)-2,3-dihydroxy-3-methylpentanoate (2,3-dihydroxy-3-methylvalerate) into 2-oxo-3-methylpentanoate (2-oxo-3-methylvalerate) and of (2R)-2,3-dihydroxy-3-methylbutanoate (2,3-dihydroxyisovalerate) into 2-oxo-3-methylbutanoate (2-oxoisovalerate), the penultimate precursor to L-isoleucine and L-valine, respectively. In Mesorhizobium japonicum (strain LMG 29417 / CECT 9101 / MAFF 303099) (Mesorhizobium loti (strain MAFF 303099)), this protein is Dihydroxy-acid dehydratase 2.